We begin with the raw amino-acid sequence, 505 residues long: Tyrosine-protein kinase Blk (505 aa).

Residues 1-37 (MGLVSSKKPDKEKPIKEKDKGQWSPLKVSAQDKDAPP) are disordered. Residue Gly-2 is the site of N-myristoyl glycine attachment. Over residues 7 to 21 (KKPDKEKPIKEKDKG) the composition is skewed to basic and acidic residues. Positions 58–118 (EDKHFVVALY…PSNFVARVES (61 aa)) constitute an SH3 domain. An SH2 domain is found at 124-220 (WFFRSQGRKE…GLCQRLTLPC (97 aa)). One can recognise a Protein kinase domain in the interval 241 to 494 (LRLVRKLGSG…FLQSVLEDFY (254 aa)). ATP is bound by residues 247–255 (LGSGQFGEV) and Lys-269. Asp-360 acts as the Proton acceptor in catalysis. Phosphotyrosine; by autocatalysis is present on Tyr-389.

The protein belongs to the protein kinase superfamily. Tyr protein kinase family. SRC subfamily. Interacts with CBL (via SH2 domain). Interacts with CD79A and CD79B (via SH2 domain). Post-translationally, phosphorylated on tyrosine residues after antibody-mediated surface engagement of the B-cell antigen receptor (BCR). Ubiquitination of activated BLK by the UBE3A ubiquitin protein ligase leads to its degradation by the ubiquitin-proteasome pathway. Expressed in lymphatic organs, pancreatic islets, Leydig cells, striate ducts of salivary glands and hair follicles.

Its subcellular location is the cell membrane. It catalyses the reaction L-tyrosyl-[protein] + ATP = O-phospho-L-tyrosyl-[protein] + ADP + H(+). Its activity is regulated as follows. Antibody-mediated surface engagement of the B-cell antigen receptor (BCR) which results in the phosphorylation of BLK on tyrosine residues, stimulates the enzymatic activity. In terms of biological role, non-receptor tyrosine kinase involved in B-lymphocyte development, differentiation and signaling. B-cell receptor (BCR) signaling requires a tight regulation of several protein tyrosine kinases and phosphatases, and associated coreceptors. Binding of antigen to the B-cell antigen receptor (BCR) triggers signaling that ultimately leads to B-cell activation. Signaling through BLK plays an important role in transmitting signals through surface immunoglobulins and supports the pro-B to pre-B transition, as well as the signaling for growth arrest and apoptosis downstream of B-cell receptor. Specifically binds and phosphorylates CD79A at 'Tyr-188'and 'Tyr-199', as well as CD79B at 'Tyr-196' and 'Tyr-207'. Also phosphorylates the immunoglobulin G receptors FCGR2A, FCGR2B and FCGR2C. With FYN and LYN, plays an essential role in pre-B-cell receptor (pre-BCR)-mediated NF-kappa-B activation. Also contributes to BTK activation by indirectly stimulating BTK intramolecular autophosphorylation. In pancreatic islets, acts as a modulator of beta-cells function through the up-regulation of PDX1 and NKX6-1 and consequent stimulation of insulin secretion in response to glucose. Phosphorylates CGAS, promoting retention of CGAS in the cytosol. The polypeptide is Tyrosine-protein kinase Blk (BLK) (Homo sapiens (Human)).